The sequence spans 938 residues: MSDYKSTLNLPETGFPMRGDLAKREPGMLARWTDDDLYGIIRAAKKGKKTFILHDGPPYANGSIHIGHSVNKILKDIIVKSKGLSGYDSPYVPGWDCHGLPIELKVEQEYGKPGEKFTAAEFRAKCREYAATQVDGQRKDFIRLGVLGDWSHPYLTMDFKTEANIIRALGKIIGNGHLHKGAKPVHWCVDCRSALAEAEVEYYDKTSPSIDVAFQAIDQDALKAKFAVSNVNGPISLVIWTTTPWTLPANRAISIAPDFDYALVQIDSQAVILAKDLVESVMQRIGVTDYTILGTVKGAELELLRFTHPFMGFDVPAILGDHVTLDAGTGAVHTAPGHGPDDYVIGQKYGLETANPVGPDGTYLPGTYPTLDGVNVFKANDIVVALLQEKGALLHVEKMQHSYPCCWRHKTPIIFRATPQWFVSMDQKGLRAQSLKEIKGVQWIPDWGQARIESMVANRPDWCISRQRTWGVPMSLFVHKDTEELHPRTLELMEEVAKRVEVDGIQAWWDLDAKELLGDEADQYVKVPDTLDVWFDSGSTHSSVVDVRPEFAGHAADMYLEGSDQHRGWFMSSLMISTAMKGKAPYRQVLTHGFTVDGQGRKMSKSIGNTVSPQDVMNKLGADILRLWVASTDYTGEMAVSDEILKRAADSYRRIRNTARFLLANLNGFDPAKDMVKPEEMVVLDRWAVGCAKAAQEDILKAYEAYDFHEVVQRLMRFCSVEMGSFYLDIIKDRQYTAKADSVARRSCQTALYHIAEALVRWMAPILSFTADEVWGYLPGEREKYVFTGEWYEGLFGLADSEAMNDAFWDELLKVRGEVNKVIEQARADKKVGGSLEAAVTLYAEPELAAKLTALGDELRFVLLTSGATVADYNDAPADAQQSEVLKGLKVALSKAEGEKCPRCWHYTQDVGKVAEHAEICGRCVSNVAGDGEKRKFA.

The short motif at 58-68 (PYANGSIHIGH) is the 'HIGH' region element. Residue K183 is modified to N6-acetyllysine. L-isoleucyl-5'-AMP is bound at residue E561. The short motif at 602 to 606 (KMSKS) is the 'KMSKS' region element. K605 serves as a coordination point for ATP. The Zn(2+) site is built by C901, C904, C921, and C924.

Belongs to the class-I aminoacyl-tRNA synthetase family. IleS type 1 subfamily. In terms of assembly, monomer. Zn(2+) is required as a cofactor.

The protein localises to the cytoplasm. It carries out the reaction tRNA(Ile) + L-isoleucine + ATP = L-isoleucyl-tRNA(Ile) + AMP + diphosphate. In terms of biological role, catalyzes the attachment of isoleucine to tRNA(Ile). As IleRS can inadvertently accommodate and process structurally similar amino acids such as valine, to avoid such errors it has two additional distinct tRNA(Ile)-dependent editing activities. One activity is designated as 'pretransfer' editing and involves the hydrolysis of activated Val-AMP. The other activity is designated 'posttransfer' editing and involves deacylation of mischarged Val-tRNA(Ile). The sequence is that of Isoleucine--tRNA ligase from Shigella dysenteriae serotype 1 (strain Sd197).